A 336-amino-acid chain; its full sequence is Dihydroorotate dehydrogenase (quinone) (336 aa).

Residues 62–66 (AGLDK) and Thr86 each bind FMN. Residue Lys66 coordinates substrate. Residue 111 to 115 (NRMGF) participates in substrate binding. FMN-binding residues include Asn139 and Asn172. Asn172 is a substrate binding site. Catalysis depends on Ser175, which acts as the Nucleophile. Asn177 contributes to the substrate binding site. Lys217 and Thr245 together coordinate FMN. A substrate-binding site is contributed by 246-247 (NT). Residues Gly268, Gly297, and 318 to 319 (YS) contribute to the FMN site.

This sequence belongs to the dihydroorotate dehydrogenase family. Type 2 subfamily. In terms of assembly, monomer. It depends on FMN as a cofactor.

Its subcellular location is the cell membrane. The catalysed reaction is (S)-dihydroorotate + a quinone = orotate + a quinol. The protein operates within pyrimidine metabolism; UMP biosynthesis via de novo pathway; orotate from (S)-dihydroorotate (quinone route): step 1/1. In terms of biological role, catalyzes the conversion of dihydroorotate to orotate with quinone as electron acceptor. This is Dihydroorotate dehydrogenase (quinone) from Citrobacter koseri (strain ATCC BAA-895 / CDC 4225-83 / SGSC4696).